Reading from the N-terminus, the 250-residue chain is Small ribosomal subunit protein uS3 (250 aa).

The KH type-2 domain maps to 39–111 (IRTLIKNHYP…KVQINIFEVK (73 aa)).

It belongs to the universal ribosomal protein uS3 family. Part of the 30S ribosomal subunit. Forms a tight complex with proteins S10 and S14.

In terms of biological role, binds the lower part of the 30S subunit head. Binds mRNA in the 70S ribosome, positioning it for translation. The sequence is that of Small ribosomal subunit protein uS3 from Phytoplasma vitis (Flavescence doree phytoplasma).